We begin with the raw amino-acid sequence, 150 residues long: Cytochrome c oxidase subunit 5A, mitochondrial (150 aa).

A mitochondrion-targeting transit peptide spans 1 to 41; it reads MLGAALRRCAVAATTWAGPRGLLHSARTPGPAAAIQSVRCY. The SIFI-degron motif lies at 2 to 20; sequence LGAALRRCAVAATTWAGPR. Lys87 and Lys113 each carry N6-acetyllysine. At Thr141 the chain carries Phosphothreonine.

This sequence belongs to the cytochrome c oxidase subunit 5A family. As to quaternary structure, component of the cytochrome c oxidase (complex IV, CIV), a multisubunit enzyme composed of 14 subunits. The complex is composed of a catalytic core of 3 subunits MT-CO1, MT-CO2 and MT-CO3, encoded in the mitochondrial DNA, and 11 supernumerary subunits COX4I, COX5A, COX5B, COX6A, COX6B, COX6C, COX7A, COX7B, COX7C, COX8 and NDUFA4, which are encoded in the nuclear genome. The complex exists as a monomer or a dimer and forms supercomplexes (SCs) in the inner mitochondrial membrane with NADH-ubiquinone oxidoreductase (complex I, CI) and ubiquinol-cytochrome c oxidoreductase (cytochrome b-c1 complex, complex III, CIII), resulting in different assemblies (supercomplex SCI(1)III(2)IV(1) and megacomplex MCI(2)III(2)IV(2)). Interacts with AFG1L. Interacts with RAB5IF. In response to mitochondrial stress, the precursor protein is ubiquitinated by the SIFI complex in the cytoplasm before mitochondrial import, leading to its degradation. Within the SIFI complex, UBR4 initiates ubiquitin chain that are further elongated or branched by KCMF1.

It is found in the mitochondrion inner membrane. It functions in the pathway energy metabolism; oxidative phosphorylation. In terms of biological role, component of the cytochrome c oxidase, the last enzyme in the mitochondrial electron transport chain which drives oxidative phosphorylation. The respiratory chain contains 3 multisubunit complexes succinate dehydrogenase (complex II, CII), ubiquinol-cytochrome c oxidoreductase (cytochrome b-c1 complex, complex III, CIII) and cytochrome c oxidase (complex IV, CIV), that cooperate to transfer electrons derived from NADH and succinate to molecular oxygen, creating an electrochemical gradient over the inner membrane that drives transmembrane transport and the ATP synthase. Cytochrome c oxidase is the component of the respiratory chain that catalyzes the reduction of oxygen to water. Electrons originating from reduced cytochrome c in the intermembrane space (IMS) are transferred via the dinuclear copper A center (CU(A)) of subunit 2 and heme A of subunit 1 to the active site in subunit 1, a binuclear center (BNC) formed by heme A3 and copper B (CU(B)). The BNC reduces molecular oxygen to 2 water molecules using 4 electrons from cytochrome c in the IMS and 4 protons from the mitochondrial matrix. This Macaca mulatta (Rhesus macaque) protein is Cytochrome c oxidase subunit 5A, mitochondrial (COX5A).